The chain runs to 181 residues: Prepronociceptin (181 aa).

Residues 1–19 (MKILFCDVLLLSLLSSVFS) form the signal peptide. A propeptide spanning residues 20–95 (SCPEDCLTCQ…QSKASEMQHL (76 aa)) is cleaved from the precursor. The interval 103–125 (SVVQARDAEPEADAEPVADEADE) is disordered. Tandem repeats lie at residues 109–114 (DAEPEA) and 115–120 (DAEPVA). The 2 X 6 AA tandem repeats of D-A-E-P-X-A stretch occupies residues 109-120 (DAEPEADAEPVA). Residues 112–125 (PEADAEPVADEADE) show a composition bias toward acidic residues. The propeptide occupies 174-181 (TLHQNGNV).

This sequence belongs to the opioid neuropeptide precursor family. Post-translationally, specific enzymatic cleavages at paired basic residues probably yield other active peptides besides nociceptin. In terms of processing, the N-terminal domain contains 6 conserved cysteines thought to be involved in disulfide bonding and/or processing. Expressed predominantly in the spinal cord and brain, being more abundant in the hypothalamus and striatum. Also found in small amounts in ovary.

It is found in the secreted. In terms of biological role, ligand of the opioid receptor-like receptor OPRL1. It may act as a transmitter in the brain by modulating nociceptive and locomotor behavior. May be involved in neuronal differentiation and development. Functionally, blocks nociceptin action in pain transmission by inhibiting nociceptin-induced hyperalgesia and allodynia. Has potent analgesic activity. The sequence is that of Prepronociceptin (Pnoc) from Rattus norvegicus (Rat).